A 967-amino-acid chain; its full sequence is MKSEVSSDAPKRQENLKGVLLNPEAIGASKSFPGEVEMITSKVSNEFSHLCSDTNKQQIDLNSDGTEQEKNLVVHKKRKSQQAGTSYAQSCEVKENQRLLRLQPQSDEDNDSSFSDCISSPSSSSHFGDSDTMTSDEDKDNPRRYSPAGINSTPRTQSARAQKWPRPHTDSVSSLVMKRPCYQVSSLRRPLHRKRFVKNVSSQRTQKQKERIMLQRKKREVLARQKYALLPSSSSSSENDLSSESSSSSSTEGEEDLFVSPGENHQDGTTLPSGGMDEDVVVIEASSTPQVTANEEINVTSTDSEVEIVTVGETYRSRATLGHPRSHWGQNSQSGRTQEHRTRNRVSTIIQPLRQNTTEVVDLTVDEDDPTVVPTTSGRVESQPVSTVSSNTSTSEPASDSVSGLLGSRGCAVSETPAIPPNSNTVGTIADDSRTSTSGTNADGGPPAMPRLPSCCPQHSPCGGSSQNHVLGHPHSSCFQPHSHHFPHHHHHHHHHSSHPGVPLSPSFRDSHCPVERNAAVPPPCGATSGSGSTYHDPQALPVDLSNNGIRNHGSVSFHSTSAFDPCCPGSSSRSTVYGHQSTTSNAQTMAIDGYGSSMVAQAQPQTPSPLSSCRHYMHASYTSLTRPLHHQTSACPHSNPASQPPPPPPPPPMDYVIAHQVPFISPLPSLTSTHAVPPPPPSHHLSTAAAPLPQHLSTSHQSMSHHISATAPATQRLHAHEVIQRMEVQRRRMMQHPTRAHERPPPHPHRMHPNYGHGHHIHVPQTMSSHPRQGPERSAWEIAIETGVTAAPYQTGPLHTHLAHYHPPPRLHHLQIGALPLMVPDMAGYPHIRYISSGLDGRSFRVPFRGNFEELIHLEERLGNVNRGASQGTIERCTYPHKYKKVSTDWFSQRKLHSKQDGEEAPEEDTEEKCTICLSILEEGEDVRRLPCMHLFHQVCVDQWLITNKKCPICRVDIDTQLPTES.

2 disordered regions span residues 57 to 175 and 193 to 276; these read QQID…VSSL and RKRF…SGGM. Positions 112–131 are enriched in low complexity; it reads SSFSDCISSPSSSSHFGDSD. Polar residues predominate over residues 149–160; the sequence is GINSTPRTQSAR. Residues 232–251 are compositionally biased toward low complexity; the sequence is SSSSSSENDLSSESSSSSST. Positions 280-284 match the SUMO interaction motif 1 (SIM) motif; the sequence is VVVIE. The short motif at 305 to 311 is the SUMO interaction motif 2 (SIM) element; sequence EVEIVTV. Residues 321–343 form a disordered region; it reads LGHPRSHWGQNSQSGRTQEHRTR. The SUMO interaction motif 3 (SIM) motif lies at 360-364; sequence VVDLT. Disordered stretches follow at residues 368–452, 482–548, 629–657, and 669–689; these read DDPT…MPRL, HSHH…LSNN, LHHQTSACPHSNPASQPPPPPPPPPMDYV, and PSLTSTHAVPPPPPSHHLSTA. Positions 385–395 are enriched in low complexity; that stretch reads VSTVSSNTSTS. Over residues 482-498 the composition is skewed to basic residues; that stretch reads HSHHFPHHHHHHHHHSS. The span at 629–642 shows a compositional bias: polar residues; the sequence is LHHQTSACPHSNPA. Residues 643 to 654 show a composition bias toward pro residues; that stretch reads SQPPPPPPPPPM. The ubiquitin binding stretch occupies residues 880 to 882; sequence YPH. Positions 915 and 918 each coordinate Zn(2+). The RING-type; atypical zinc-finger motif lies at 915-956; the sequence is CTICLSILEEGEDVRRLPCMHLFHQVCVDQWLITNKKCPICR. The ubiquitin binding stretch occupies residues 930–934; the sequence is RLPCM. Residues H938 and C941 each contribute to the Zn(2+) site.

Belongs to the Arkadia family. In terms of assembly, monomer.

It is found in the nucleus. It localises to the cytoplasm. The protein localises to the PML body. It catalyses the reaction S-ubiquitinyl-[E2 ubiquitin-conjugating enzyme]-L-cysteine + [acceptor protein]-L-lysine = [E2 ubiquitin-conjugating enzyme]-L-cysteine + N(6)-ubiquitinyl-[acceptor protein]-L-lysine.. Its pathway is protein modification; protein ubiquitination. With respect to regulation, binds free ubiquitin non-covalently via its RING-type zinc finger. Ubiquitin-binding leads to enhance the E3 ubiquitin-protein ligase activity by stabilizing the ubiquitin-conjugating enzyme E2 (donor ubiquitin) in the 'closed' conformation and activating ubiquitin transfer. In terms of biological role, E3 ubiquitin-protein ligase required for mesoderm patterning during embryonic development. Acts as an enhancer of the transcriptional responses of the smad2/smad3 effectors, which are activated downstream of BMP. Acts by mediating ubiquitination and degradation of SMAD inhibitors such as smad7, inducing their proteasomal degradation and thereby enhancing the transcriptional activity of TGF-beta and BMP. Specifically binds polysumoylated chains via SUMO interaction motifs (SIMs) and mediates ubiquitination of sumoylated substrates. The regulation of the BMP-SMAD signaling is however independent of sumoylation and is not dependent of SUMO interaction motifs (SIMs). This Xenopus laevis (African clawed frog) protein is E3 ubiquitin-protein ligase arkadia-C (rnf111-c).